Reading from the N-terminus, the 392-residue chain is GTPase Obg (392 aa).

The Obg domain occupies 1-159 (MKFVDEATIL…RDLQLELMLL (159 aa)). The tract at residues 127–148 (NSRFKSSVNRSPRQKTMGTPGD) is disordered. Residues 129–143 (RFKSSVNRSPRQKTM) are compositionally biased toward polar residues. The OBG-type G domain maps to 160–333 (ADVGMLGMPN…LCWDVMAFII (174 aa)). GTP contacts are provided by residues 166–173 (GMPNAGKS), 191–195 (FTTLV), 213–216 (DIPG), 283–286 (NKID), and 314–316 (SAA). Mg(2+)-binding residues include Ser-173 and Thr-193. Residues 363–386 (EQEVEVEDDEEWDEDWDEDDEEGV) are compositionally biased toward acidic residues. The disordered stretch occupies residues 363–392 (EQEVEVEDDEEWDEDWDEDDEEGVEFIYKR).

This sequence belongs to the TRAFAC class OBG-HflX-like GTPase superfamily. OBG GTPase family. As to quaternary structure, monomer. It depends on Mg(2+) as a cofactor.

It is found in the cytoplasm. Its function is as follows. An essential GTPase which binds GTP, GDP and possibly (p)ppGpp with moderate affinity, with high nucleotide exchange rates and a fairly low GTP hydrolysis rate. Plays a role in control of the cell cycle, stress response, ribosome biogenesis and in those bacteria that undergo differentiation, in morphogenesis control. This Enterobacter sp. (strain 638) protein is GTPase Obg.